Consider the following 810-residue polypeptide: Plasminogen (810 aa).

The N-terminal stretch at 1–19 (MQRKELVLLFLLFLQPGHG) is a signal peptide. Positions 20–98 (IPLDDYVTTQ…RDVILFEKKM (79 aa)) constitute a PAN domain. 24 disulfides stabilise this stretch: Cys-49–Cys-73, Cys-53–Cys-61, Cys-103–Cys-181, Cys-124–Cys-164, Cys-152–Cys-176, Cys-185–Cys-262, Cys-188–Cys-316, Cys-206–Cys-245, Cys-234–Cys-257, Cys-275–Cys-352, Cys-296–Cys-335, Cys-324–Cys-347, Cys-379–Cys-456, Cys-400–Cys-439, Cys-428–Cys-451, Cys-482–Cys-561, Cys-503–Cys-544, Cys-532–Cys-556, Cys-569–Cys-685, Cys-579–Cys-586, Cys-607–Cys-623, Cys-699–Cys-766, Cys-729–Cys-745, and Cys-756–Cys-784. 5 consecutive Kringle domains span residues 103-181 (CKVG…IIQC), 185-262 (CMHC…IPRC), 275-352 (CLMG…IPDC), 379-456 (CYQG…LKKC), and 482-561 (CIID…IPHC). Asn-339 carries N-linked (GlcNAc...) asparagine glycosylation. The tract at residues 398 to 418 (KKCQPWTSMRPHRHSKTPENY) is disordered. In terms of domain architecture, Peptidase S1 spans 582-808 (RVGGCVAHPH…YVSWLQDVMR (227 aa)). A Phosphoserine modification is found at Ser-598. Residues His-622 and Asp-665 each act as charge relay system in the active site. The active-site Charge relay system is Ser-760.

The protein belongs to the peptidase S1 family. Plasminogen subfamily. In terms of assembly, interacts with CSPG4 and AMOT. Interacts (via the Kringle domains) with HRG; the interaction tethers PLG to the cell surface and enhances its activation. Interacts (via Kringle 4 domain) with ADA; the interaction stimulates PLG activation when in complex with DPP4. Angiostatin: Interacts with ATP5F1A; the interaction inhibits most of the angiogenic effects of angiostatin. In terms of processing, in the presence of the inhibitor, the activation involves only cleavage after Arg-582, yielding two chains held together by two disulfide bonds. In the absence of the inhibitor, the activation involves additionally the removal of the activation peptide.

The protein localises to the secreted. It catalyses the reaction Preferential cleavage: Lys-|-Xaa &gt; Arg-|-Xaa, higher selectivity than trypsin. Converts fibrin into soluble products.. With respect to regulation, converted into plasmin by plasminogen activators, both plasminogen and its activator being bound to fibrin. Cannot be activated with streptokinase. Functionally, plasmin dissolves the fibrin of blood clots and acts as a proteolytic factor in a variety of other processes including embryonic development, tissue remodeling, tumor invasion, and inflammation. In ovulation, weakens the walls of the Graafian follicle. It activates the urokinase-type plasminogen activator, collagenases and several complement zymogens, such as C1, C4 and C5. Cleavage of fibronectin and laminin leads to cell detachment and apoptosis. Also cleaves fibrin, thrombospondin and von Willebrand factor. Its role in tissue remodeling and tumor invasion may be modulated by CSPG4. Binds to cells. The protein is Plasminogen (PLG) of Erinaceus europaeus (Western European hedgehog).